Reading from the N-terminus, the 420-residue chain is Serine hydroxymethyltransferase (420 aa).

Residues leucine 121 and glycine 125 to leucine 127 contribute to the (6S)-5,6,7,8-tetrahydrofolate site. An N6-(pyridoxal phosphate)lysine modification is found at lysine 230. Residues glutamate 246 and serine 354–phenylalanine 356 each bind (6S)-5,6,7,8-tetrahydrofolate.

Belongs to the SHMT family. As to quaternary structure, homodimer. Pyridoxal 5'-phosphate serves as cofactor.

It localises to the cytoplasm. It carries out the reaction (6R)-5,10-methylene-5,6,7,8-tetrahydrofolate + glycine + H2O = (6S)-5,6,7,8-tetrahydrofolate + L-serine. It participates in one-carbon metabolism; tetrahydrofolate interconversion. The protein operates within amino-acid biosynthesis; glycine biosynthesis; glycine from L-serine: step 1/1. Catalyzes the reversible interconversion of serine and glycine with tetrahydrofolate (THF) serving as the one-carbon carrier. This reaction serves as the major source of one-carbon groups required for the biosynthesis of purines, thymidylate, methionine, and other important biomolecules. Also exhibits THF-independent aldolase activity toward beta-hydroxyamino acids, producing glycine and aldehydes, via a retro-aldol mechanism. The protein is Serine hydroxymethyltransferase of Rickettsia prowazekii (strain Madrid E).